The chain runs to 255 residues: MKIGVFDSGVGGFSVLKSLLKAQLFDEIIYYGDSARVPYGTKDPTTIKQFGLEALDFFKPHQIKLLIVACNTASALALEEMQKHSKIPVVGVIEPSILAIKRQVKDKNAPILVLGTKATIQSNAYDNALKQQGYLNVSHLATSLFVPLIEESILEGELLETCMRYYFTPLEILPEVVILGCTHFPLIAQKIEGYFMEHFALSTPPLLIHSGDAIVEYLQQNYALKKNACAFPKVEFHASGDVVWLEKQAKEWLKL.

Residues 7-8 and 39-40 contribute to the substrate site; these read DS and YG. Cysteine 70 serves as the catalytic Proton donor/acceptor. A substrate-binding site is contributed by 71–72; the sequence is NT. Cysteine 181 (proton donor/acceptor) is an active-site residue. Position 182-183 (182-183) interacts with substrate; that stretch reads TH.

The protein belongs to the aspartate/glutamate racemases family.

It catalyses the reaction L-glutamate = D-glutamate. It functions in the pathway cell wall biogenesis; peptidoglycan biosynthesis. In terms of biological role, provides the (R)-glutamate required for cell wall biosynthesis. The sequence is that of Glutamate racemase from Helicobacter pylori (strain ATCC 700392 / 26695) (Campylobacter pylori).